The chain runs to 390 residues: Succinyl-diaminopimelate desuccinylase (390 aa).

H74 provides a ligand contact to Zn(2+). D76 is an active-site residue. Position 107 (D107) interacts with Zn(2+). E140 functions as the Proton acceptor in the catalytic mechanism. 3 residues coordinate Zn(2+): E141, E169, and H363.

The protein belongs to the peptidase M20A family. DapE subfamily. In terms of assembly, homodimer. Requires Zn(2+) as cofactor. Co(2+) serves as cofactor.

The enzyme catalyses N-succinyl-(2S,6S)-2,6-diaminopimelate + H2O = (2S,6S)-2,6-diaminopimelate + succinate. Its pathway is amino-acid biosynthesis; L-lysine biosynthesis via DAP pathway; LL-2,6-diaminopimelate from (S)-tetrahydrodipicolinate (succinylase route): step 3/3. Its function is as follows. Catalyzes the hydrolysis of N-succinyl-L,L-diaminopimelic acid (SDAP), forming succinate and LL-2,6-diaminopimelate (DAP), an intermediate involved in the bacterial biosynthesis of lysine and meso-diaminopimelic acid, an essential component of bacterial cell walls. The polypeptide is Succinyl-diaminopimelate desuccinylase (Bartonella henselae (strain ATCC 49882 / DSM 28221 / CCUG 30454 / Houston 1) (Rochalimaea henselae)).